The following is a 313-amino-acid chain: WD repeat-containing protein 82 (313 aa).

6 WD repeats span residues 19–58 (ENSD…PKRT), 105–144 (GHSK…CQGL), 146–184 (HLQG…KGPF), 192–231 (DRTC…VMHT), 236–276 (NNSK…KVAV), and 280–313 (KHTG…TIDD).

Belongs to the WD repeat SWD2 family. Component of the SET1/COMPASS complex. Component of the PNUTS-PP1 phosphatase complex.

The protein localises to the nucleus. Its subcellular location is the chromosome. It is found in the cytoplasm. In terms of biological role, regulatory component of the SET1/COMPASS complex implicated in the tethering of this complex to transcriptional start sites of active genes. Facilitates histone H3 'Lys-4' methylation (H3K4me) via recruitment of the SETD1A or SETD1B to the 'Ser-5' phosphorylated C-terminal domain (CTD) of RNA polymerase II large subunit (POLR2A). Component of the PNUTS-PP1 protein phosphatase complex, a protein phosphatase 1 (PP1) complex that promotes RNA polymerase II transcription pause-release, allowing transcription elongation. This Xenopus tropicalis (Western clawed frog) protein is WD repeat-containing protein 82 (wdr82).